The chain runs to 98 residues: Integration host factor subunit alpha (98 aa).

Positions 50–71 (GNFDLRDKNQRPGRNPKTGEDI) are disordered.

The protein belongs to the bacterial histone-like protein family. As to quaternary structure, heterodimer of an alpha and a beta chain.

This protein is one of the two subunits of integration host factor, a specific DNA-binding protein that functions in genetic recombination as well as in transcriptional and translational control. This chain is Integration host factor subunit alpha, found in Proteus mirabilis (strain HI4320).